The primary structure comprises 869 residues: 1-phosphatidylinositol 4,5-bisphosphate phosphodiesterase 1 (869 aa).

The EF-hand domain occupies 269–304; sequence VSTGQLLEFFQLADINHNGLLNYFEFEKFIKILKNR. Positions 282, 284, 286, and 293 each coordinate Ca(2+). Positions 382-520 constitute a PI-PLC X-box domain; it reads YSKPLNHYFI…LKHKILLKSK (139 aa). Active-site residues include His-395 and His-439. Positions 518 and 520 each coordinate substrate. The tract at residues 546-571 is disordered; it reads ANEQELRMKDDSTNSSSATNSSSMQR. Over residues 558–568 the composition is skewed to low complexity; that stretch reads TNSSSATNSSS. Residues 590 to 709 form the PI-PLC Y-box domain; that stretch reads ISGIHGIKFR…SGYVLKPKKL (120 aa). The substrate site is built by Ser-614 and Arg-643. The C2 domain maps to 713 to 862; that stretch reads VTKAKMIPLI…EGEQYIFCTL (150 aa).

As to quaternary structure, interacts with SGD1. The cofactor is Ca(2+).

The catalysed reaction is a 1,2-diacyl-sn-glycero-3-phospho-(1D-myo-inositol-4,5-bisphosphate) + H2O = 1D-myo-inositol 1,4,5-trisphosphate + a 1,2-diacyl-sn-glycerol + H(+). In terms of biological role, the production of the second messenger molecules diacylglycerol (DAG) and inositol 1,4,5-trisphosphate (IP3) is mediated by activated phosphatidylinositol-specific phospholipase C enzymes. Required for cell growth, osmoresistance and expression of GPD1. The polypeptide is 1-phosphatidylinositol 4,5-bisphosphate phosphodiesterase 1 (PLC1) (Saccharomyces cerevisiae (strain ATCC 204508 / S288c) (Baker's yeast)).